The primary structure comprises 152 residues: MEAVLNELVSVEDLKNFERKFQSEQAAGSVSKSTQFEYAWCLVRSKYNEDIRRGIVLLEELLPKGSKEEQRDYVFYLAVGNYRLKEYEKALKYVRGLLQTEPQNNQAKELERLIDKAMKKDGLVGMAIVGGMALGVAGLAGLIGLAVSKSKS.

Met-1 is subject to N-acetylmethionine. At 1 to 122 the chain is on the cytoplasmic side; the sequence is MEAVLNELVS…LIDKAMKKDG (122 aa). At Ser-10 the chain carries Phosphoserine. The stretch at 71–104 is one TPR repeat; sequence RDYVFYLAVGNYRLKEYEKALKYVRGLLQTEPQN. The helical transmembrane segment at 123–143 threads the bilayer; it reads LVGMAIVGGMALGVAGLAGLI. The Mitochondrial intermembrane segment spans residues 144–152; sequence GLAVSKSKS.

It belongs to the FIS1 family. Interacts with DNM1L/DLP1 through the TPR region; may form part of a larger protein complex at the endoplasmic reticulum-mitochondrial interface during mitochondrial fission. Interacts with MARCHF5. Interacts with MIEF1. Interacts with PEX11A, PEX11B and PEX11G. Post-translationally, ubiquitinated by MARCHF5.

It localises to the mitochondrion outer membrane. Its subcellular location is the peroxisome membrane. Involved in the fragmentation of the mitochondrial network and its perinuclear clustering. Plays a minor role in the recruitment and association of the fission mediator dynamin-related protein 1 (DNM1L) to the mitochondrial surface and mitochondrial fission. May not be essential for the assembly of functional fission complexes and the subsequent membrane scission event. Also mediates peroxisomal fission. May act when the products of fission are directed toward mitochondrial homeostasis, mitophagy, or apoptosis. Can induce cytochrome c release from the mitochondrion to the cytosol, ultimately leading to apoptosis. This is Mitochondrial fission 1 protein (Fis1) from Mus musculus (Mouse).